A 135-amino-acid polypeptide reads, in one-letter code: Bacilliredoxin CHU_0972 (135 aa).

The protein belongs to the bacilliredoxin family.

The polypeptide is Bacilliredoxin CHU_0972 (Cytophaga hutchinsonii (strain ATCC 33406 / DSM 1761 / CIP 103989 / NBRC 15051 / NCIMB 9469 / D465)).